The following is a 325-amino-acid chain: UDP-N-acetylenolpyruvoylglucosamine reductase (325 aa).

Positions 40-221 (RTGGLAELFY…RAAMDEVALH (182 aa)) constitute an FAD-binding PCMH-type domain. The active site involves Arg-186. The active-site Proton donor is the Ser-235. Glu-305 is an active-site residue.

Belongs to the MurB family. Requires FAD as cofactor.

It is found in the cytoplasm. The enzyme catalyses UDP-N-acetyl-alpha-D-muramate + NADP(+) = UDP-N-acetyl-3-O-(1-carboxyvinyl)-alpha-D-glucosamine + NADPH + H(+). Its pathway is cell wall biogenesis; peptidoglycan biosynthesis. Cell wall formation. The chain is UDP-N-acetylenolpyruvoylglucosamine reductase from Bartonella henselae (strain ATCC 49882 / DSM 28221 / CCUG 30454 / Houston 1) (Rochalimaea henselae).